The sequence spans 294 residues: Probable 2-(5''-triphosphoribosyl)-3'-dephosphocoenzyme-A synthase (294 aa).

This sequence belongs to the CitG/MdcB family.

The catalysed reaction is 3'-dephospho-CoA + ATP = 2'-(5''-triphospho-alpha-D-ribosyl)-3'-dephospho-CoA + adenine. The chain is Probable 2-(5''-triphosphoribosyl)-3'-dephosphocoenzyme-A synthase from Streptococcus pyogenes serotype M3 (strain ATCC BAA-595 / MGAS315).